The following is a 343-amino-acid chain: Selenide, water dikinase (343 aa).

The active site involves U16. U16 is a non-standard amino acid (selenocysteine). Residues K19 and 46–48 contribute to the ATP site; that span reads GAE. D49 provides a ligand contact to Mg(2+). ATP is bound by residues D66, D89, and 137–139; that span reads GHT. Residue D89 participates in Mg(2+) binding. Mg(2+) is bound at residue D225.

The protein belongs to the selenophosphate synthase 1 family. Class I subfamily. As to quaternary structure, homodimer. It depends on Mg(2+) as a cofactor.

The enzyme catalyses hydrogenselenide + ATP + H2O = selenophosphate + AMP + phosphate + 2 H(+). Its function is as follows. Synthesizes selenophosphate from selenide and ATP. This chain is Selenide, water dikinase, found in Geobacter sp. (strain M21).